A 170-amino-acid chain; its full sequence is Peptide deformylase-like (170 aa).

Residue E139 is part of the active site.

It belongs to the polypeptide deformylase family.

This chain is Peptide deformylase-like, found in Bradyrhizobium diazoefficiens (strain JCM 10833 / BCRC 13528 / IAM 13628 / NBRC 14792 / USDA 110).